Consider the following 1666-residue polypeptide: Probable clathrin heavy chain (1666 aa).

7 WD40-like repeat regions span residues 24–67 (SFGF…RPIS), 68–107 (ADSV…MNQD), 108–148 (VVYW…SSLN), 149–194 (GTQI…QPLE), 195–255 (SHAS…PEAV), 256–299 (NDFP…VSGE), and 300–328 (SIFV…VSIN). Thr392 carries the post-translational modification Phosphothreonine. The residue at position 393 (Ser393) is a Phosphoserine. 7 CHCR repeats span residues 534-680 (MFNS…QIVV), 683-825 (ATRY…DEEL), 830-969 (LMSV…LLDQ), 975-1120 (VPES…IPDA), 1124-1265 (YLKA…FRLA), 1270-1415 (LNLI…MLLT), and 1418-1561 (LAAL…YECF).

The protein belongs to the clathrin heavy chain family. Clathrin triskelions, composed of 3 heavy chains and 3 light chains, are the basic subunits of the clathrin coat.

The protein resides in the cytoplasmic vesicle membrane. Its subcellular location is the membrane. It is found in the coated pit. Its function is as follows. Clathrin is the major protein of the polyhedral coat of coated pits and vesicles. The chain is Probable clathrin heavy chain (chc1) from Schizosaccharomyces pombe (strain 972 / ATCC 24843) (Fission yeast).